We begin with the raw amino-acid sequence, 115 residues long: Holo-[acyl-carrier-protein] synthase (115 aa).

Residues Asp8 and Glu50 each coordinate Mg(2+).

Belongs to the P-Pant transferase superfamily. AcpS family. It depends on Mg(2+) as a cofactor.

It localises to the cytoplasm. The enzyme catalyses apo-[ACP] + CoA = holo-[ACP] + adenosine 3',5'-bisphosphate + H(+). Functionally, transfers the 4'-phosphopantetheine moiety from coenzyme A to a Ser of acyl-carrier-protein. In Arthrobacter sp. (strain FB24), this protein is Holo-[acyl-carrier-protein] synthase.